The primary structure comprises 168 residues: MSPTTGPQPNPRAWECHHTTGPQPNPRAWECHRMKGPQPNPRAWECHLRRVHNLTPEPGNVTIRGVHILTPEPGNVTIRGVHNLTPEPGNVTERGVHNLTPEPGNVTERGVHNLIPEPGNVTVKRGPQPNPRAWECHRTRGPQPNPRAWECHRTRGPQPNPRAWECHR.

The segment covering 1–10 (MSPTTGPQPN) has biased composition (pro residues). Disordered regions lie at residues 1–23 (MSPTTGPQPNPRAWECHHTTGPQ) and 117–143 (EPGNVTVKRGPQPNPRAWECHRTRGPQ).

This is an uncharacterized protein from Homo sapiens (Human).